The following is a 231-amino-acid chain: Large ribosomal subunit protein uL1 (231 aa).

The protein belongs to the universal ribosomal protein uL1 family. As to quaternary structure, part of the 50S ribosomal subunit.

In terms of biological role, binds directly to 23S rRNA. The L1 stalk is quite mobile in the ribosome, and is involved in E site tRNA release. Protein L1 is also a translational repressor protein, it controls the translation of the L11 operon by binding to its mRNA. The sequence is that of Large ribosomal subunit protein uL1 from Chlorobaculum tepidum (strain ATCC 49652 / DSM 12025 / NBRC 103806 / TLS) (Chlorobium tepidum).